Reading from the N-terminus, the 613-residue chain is Forkhead box protein O (613 aa).

Disordered regions lie at residues 39-90, 182-205, 217-269, and 317-360; these read RARS…KNSS, KSVR…RAKK, GLND…RLSP, and QGFS…PASG. The residue at position 44 (T44) is a Phosphothreonine; by PKB/AKT1. Positions 63–80 are enriched in polar residues; it reads TKASNQQLAPGDSQQAIQ. S75 is subject to Phosphoserine. Low complexity predominate over residues 81–90; sequence NANAAKKNSS. Residues 95–201 constitute a DNA-binding region (fork-head); the sequence is WGNLSYADLI…ETSRYEKRRG (107 aa). S190 is modified (phosphoserine; by PKB/AKT1). 2 stretches are compositionally biased toward polar residues: residues 221 to 230 and 256 to 265; these read ATPSPSSSVS and RASSNASSCG. A Phosphoserine; by PKB/AKT1 modification is found at S259. S262, S263, and S268 each carry phosphoserine. Pro residues predominate over residues 327–336; it reads SQPPPPPYQP. A compositionally biased stretch (low complexity) spans 337-353; sequence PQHQQAQQQQQQQSPYA.

As to quaternary structure, interacts with melt.

Its subcellular location is the cytoplasm. It is found in the nucleus. Transcription factor involved in the regulation of the insulin signaling pathway. Consistently activates both the downstream target Thor\d4EBP and the feedback control target InR. Involved in negative regulation of the cell cycle, modulating cell growth and proliferation. In response to cellular stresses, such as nutrient deprivation or increased levels of reactive oxygen species, foxo is activated and inhibits growth through the action of target genes such as Thor. Foxo activated in the adult fat body can regulate lifespan in adults; an insulin peptide itself may function as one secondary messenger of insulin-regulated aging. Also regulates Lip4, homolog of human acid lipases, thereby acting as a key modulator of lipid metabolism by insulin signaling and integrates insulin responses to glucose and lipid homeostasis. In Drosophila melanogaster (Fruit fly), this protein is Forkhead box protein O.